Reading from the N-terminus, the 606-residue chain is Chaperone protein DnaK (606 aa).

Threonine 174 carries the phosphothreonine; by autocatalysis modification. The tract at residues 578-606 (YTQAGPQGGTNPGGQGGTDGNVNTDYKVY) is disordered. Residues 583-596 (PQGGTNPGGQGGTD) are compositionally biased toward gly residues.

The protein belongs to the heat shock protein 70 family.

Acts as a chaperone. In Caldicellulosiruptor saccharolyticus (strain ATCC 43494 / DSM 8903 / Tp8T 6331), this protein is Chaperone protein DnaK.